A 309-amino-acid polypeptide reads, in one-letter code: Clotting factor G beta subunit (309 aa).

A signal peptide spans 1–31 (MDISFLVFITLSMALFSSNVTGTSVTSRVRR). 4 disulfide bridges follow: cysteine 38–cysteine 158, cysteine 74–cysteine 90, cysteine 205–cysteine 227, and cysteine 238–cysteine 268. One can recognise a Peptidase S1 domain in the interval 47-292 (IIGGGIATPH…YVNWLQEITF (246 aa)). Catalysis depends on histidine 89, which acts as the Charge relay system. Asparagine 100 is a glycosylation site (N-linked (GlcNAc...) asparagine). Aspartate 138 (charge relay system) is an active-site residue. Residue asparagine 206 is glycosylated (N-linked (GlcNAc...) asparagine). Residue serine 242 is the Charge relay system of the active site.

The protein belongs to the peptidase S1 family. In terms of assembly, clotting factor G is a heterodimer composed of two non-covalently associated subunits, alpha and beta. Upon activation, converted to a two-chain active form linked by a disulfide bond. Forms a covalent heterodimer with intracellular coagulation inhibitor 3/LICI-3. In terms of tissue distribution, expressed in the hemocytes (at protein level).

The catalysed reaction is Selective cleavage of 98-Arg-|-Ile-99 bond in Limulus proclotting enzyme to form active clotting enzyme.. Its activity is regulated as follows. Binding to (1-&gt;3)-beta-D-glucan to alpha subunit, induces autocatalysis and activation of beta subunit. Inhibited by intracellular coagulation inhibitor 3/LICI-3 and to a lesser extend by intracellular coagulation inhibitor 2/LICI-2. Its function is as follows. Component of the heterodimer clotting factor G which may play a role in defense mechanisms against fungi. Initiates a (1-&gt;3)-beta-glucan-sensing clotting pathway whereby the alpha subunit binds to glucans containing (1-&gt;3)-beta linkages, which are components of the fungal cell wall, and the beta subunit catalyzes the activation of proclotting enzyme. This is Clotting factor G beta subunit from Tachypleus tridentatus (Japanese horseshoe crab).